Reading from the N-terminus, the 428-residue chain is Gamma-glutamyl phosphate reductase (428 aa).

The protein belongs to the gamma-glutamyl phosphate reductase family.

Its subcellular location is the cytoplasm. It carries out the reaction L-glutamate 5-semialdehyde + phosphate + NADP(+) = L-glutamyl 5-phosphate + NADPH + H(+). It participates in amino-acid biosynthesis; L-proline biosynthesis; L-glutamate 5-semialdehyde from L-glutamate: step 2/2. Functionally, catalyzes the NADPH-dependent reduction of L-glutamate 5-phosphate into L-glutamate 5-semialdehyde and phosphate. The product spontaneously undergoes cyclization to form 1-pyrroline-5-carboxylate. The sequence is that of Gamma-glutamyl phosphate reductase from Clostridium tetani (strain Massachusetts / E88).